Here is a 299-residue protein sequence, read N- to C-terminus: 33 kDa chaperonin (299 aa).

Cystine bridges form between C234-C236 and C268-C271.

Belongs to the HSP33 family. Post-translationally, under oxidizing conditions two disulfide bonds are formed involving the reactive cysteines. Under reducing conditions zinc is bound to the reactive cysteines and the protein is inactive.

It localises to the cytoplasm. Its function is as follows. Redox regulated molecular chaperone. Protects both thermally unfolding and oxidatively damaged proteins from irreversible aggregation. Plays an important role in the bacterial defense system toward oxidative stress. In Pseudomonas putida (strain ATCC 47054 / DSM 6125 / CFBP 8728 / NCIMB 11950 / KT2440), this protein is 33 kDa chaperonin.